The sequence spans 455 residues: GTPase Der (455 aa).

2 consecutive EngA-type G domains span residues 4–174 (PIVA…PAGQ) and 183–358 (LKIA…SERN). Residues 10–17 (GRPNVGKS), 57–61 (DTAGL), 126–129 (NKAD), 189–196 (GRPNVGKS), 236–240 (DTAGI), and 301–304 (NKWD) contribute to the GTP site. The 86-residue stretch at 359–444 (KRVSTSDINN…PIILVFKGRE (86 aa)) folds into the KH-like domain.

The protein belongs to the TRAFAC class TrmE-Era-EngA-EngB-Septin-like GTPase superfamily. EngA (Der) GTPase family. As to quaternary structure, associates with the 50S ribosomal subunit.

Its function is as follows. GTPase that plays an essential role in the late steps of ribosome biogenesis. This Herpetosiphon aurantiacus (strain ATCC 23779 / DSM 785 / 114-95) protein is GTPase Der.